The primary structure comprises 679 residues: Glycine--tRNA ligase beta subunit (679 aa).

This sequence belongs to the class-II aminoacyl-tRNA synthetase family. Tetramer of two alpha and two beta subunits.

The protein resides in the cytoplasm. It catalyses the reaction tRNA(Gly) + glycine + ATP = glycyl-tRNA(Gly) + AMP + diphosphate. The polypeptide is Glycine--tRNA ligase beta subunit (Streptococcus pyogenes serotype M12 (strain MGAS9429)).